The sequence spans 621 residues: Chaperone protein HtpG (621 aa).

The segment at 1 to 325 (MTDASVKETF…SQDLSLNVSR (325 aa)) is a; substrate-binding. The tract at residues 326 to 541 (EMLQSDPKLA…EGDIDVNLER (216 aa)) is b. The segment at 542 to 621 (MLKRHGQLQD…RLGSVMDSAL (80 aa)) is c.

Belongs to the heat shock protein 90 family. In terms of assembly, homodimer.

The protein localises to the cytoplasm. Its function is as follows. Molecular chaperone. Has ATPase activity. The polypeptide is Chaperone protein HtpG (Roseobacter denitrificans (strain ATCC 33942 / OCh 114) (Erythrobacter sp. (strain OCh 114))).